A 191-amino-acid chain; its full sequence is MTENYIPRLKTRYQDEIRTKLQGEFEFENVMQIPGVTKIVVNMGVGDAARDSKLINGAIEDLTAITGQKPQLRRAKKSIANFKLREGMPIGAKVTLRGDRMWEFLDRLLTVALPRIRDFRGLSDQQFDGHGNYTFGLTEQTMFYEIDVDKIDRPRGMDITVVTTAVTDDEGRSLLRELGFPFKGEDGNRQQ.

It belongs to the universal ribosomal protein uL5 family. As to quaternary structure, part of the 50S ribosomal subunit; part of the 5S rRNA/L5/L18/L25 subcomplex. Contacts the 5S rRNA and the P site tRNA. Forms a bridge to the 30S subunit in the 70S ribosome.

Functionally, this is one of the proteins that bind and probably mediate the attachment of the 5S RNA into the large ribosomal subunit, where it forms part of the central protuberance. In the 70S ribosome it contacts protein S13 of the 30S subunit (bridge B1b), connecting the 2 subunits; this bridge is implicated in subunit movement. Contacts the P site tRNA; the 5S rRNA and some of its associated proteins might help stabilize positioning of ribosome-bound tRNAs. The sequence is that of Large ribosomal subunit protein uL5 from Corynebacterium glutamicum (strain R).